A 447-amino-acid polypeptide reads, in one-letter code: N-succinylarginine dihydrolase (447 aa).

Substrate contacts are provided by residues 19-28, N110, and 137-138; these read AGLSFGNEAS and HR. The active site involves E174. R212 is a binding site for substrate. H248 is an active-site residue. 2 residues coordinate substrate: D250 and N359. C365 functions as the Nucleophile in the catalytic mechanism.

Belongs to the succinylarginine dihydrolase family. As to quaternary structure, homodimer.

The catalysed reaction is N(2)-succinyl-L-arginine + 2 H2O + 2 H(+) = N(2)-succinyl-L-ornithine + 2 NH4(+) + CO2. It functions in the pathway amino-acid degradation; L-arginine degradation via AST pathway; L-glutamate and succinate from L-arginine: step 2/5. Catalyzes the hydrolysis of N(2)-succinylarginine into N(2)-succinylornithine, ammonia and CO(2). This Salmonella agona (strain SL483) protein is N-succinylarginine dihydrolase.